The following is a 551-amino-acid chain: Hydroxylamine reductase (551 aa).

Cys-3, Cys-6, Cys-18, and Cys-25 together coordinate [2Fe-2S] cluster. Residues His-249, Glu-273, Cys-317, Cys-405, Cys-433, Cys-459, Glu-493, and Lys-495 each contribute to the hybrid [4Fe-2O-2S] cluster site. At Cys-405 the chain carries Cysteine persulfide.

Belongs to the HCP family. It depends on [2Fe-2S] cluster as a cofactor. Hybrid [4Fe-2O-2S] cluster serves as cofactor.

It localises to the cytoplasm. The enzyme catalyses A + NH4(+) + H2O = hydroxylamine + AH2 + H(+). Catalyzes the reduction of hydroxylamine to form NH(3) and H(2)O. This chain is Hydroxylamine reductase, found in Actinobacillus pleuropneumoniae serotype 5b (strain L20).